Consider the following 193-residue polypeptide: MKLENFKVIPEYPEYLISPYGEVYSTKSNKLLTHHLGSAGYPFVTFYEQGKNVSIVLHRLLARVFKDLPSLESELEVDHKDRNKLNFSLDNLVVMTKQDHRIKTTVERGHTIGGNKCPYCNKQINSSSKTCFDCKPKSSPDITAEQIEYWVINYSWVKASKELGLSDNGLRKRYKSLTGKDPKSIKKKVSQVG.

Functionally, endonuclease that cleaves only one strand of asymmetric DNA substrates thereby introducing interruptions into the template or coding strand. The protein is H-N-H endonuclease F-TflII of Escherichia phage T5 (Enterobacteria phage T5).